The following is a 498-amino-acid chain: Fascin-3 (498 aa).

This sequence belongs to the fascin family. In terms of tissue distribution, expressed in testis.

The protein resides in the cytoplasm. The protein localises to the cytoskeleton. In terms of biological role, acts as an actin bundling protein. In Homo sapiens (Human), this protein is Fascin-3 (FSCN3).